Here is a 154-residue protein sequence, read N- to C-terminus: Superoxide dismutase [Cu-Zn] (154 aa).

Cu cation is bound by residues His-45, His-47, and His-62. The cysteines at positions 56 and 146 are disulfide-linked. The Zn(2+) site is built by His-62, His-70, His-79, and Asp-82. Cu cation is bound at residue His-120.

This sequence belongs to the Cu-Zn superoxide dismutase family. Homodimer. The cofactor is Cu cation. Zn(2+) serves as cofactor.

The protein localises to the cytoplasm. The enzyme catalyses 2 superoxide + 2 H(+) = H2O2 + O2. Destroys radicals which are normally produced within the cells and which are toxic to biological systems. This chain is Superoxide dismutase [Cu-Zn], found in Bombyx mori (Silk moth).